The following is a 475-amino-acid chain: DNA-binding protein D-ETS-6 (475 aa).

Residues 42–150 form a disordered region; it reads SIGSGNETKL…VSPVEVPVDP (109 aa). The segment covering 70 to 108 has biased composition (low complexity); it reads SSSSTSDSSASSYSSTDSDSGSSTSSSSIRSQLPALNLP. Residues 109–121 are compositionally biased toward pro residues; the sequence is VPLPLATPTPPAV. Over residues 122–144 the composition is skewed to low complexity; it reads SSPHQAPSPRRNSSDSNRSVSPV. Positions 132–219 constitute a PNT domain; sequence RNSSDSNRSV…QHFAISLYHA (88 aa). The segment at residues 255–335 is a DNA-binding region (ETS); sequence IQLWQFLLEL…HGKRYAYKFD (81 aa). The disordered stretch occupies residues 350 to 475; that stretch reads GDPASSMLGS…PVTPTTNAFN (126 aa). Basic residues predominate over residues 375–388; the sequence is PPLHHHPQHSHPHH. Positions 401-436 are enriched in low complexity; that stretch reads SSPASNSSSLGFPSSSTASSQASPGQAPASSSASTS. Residues 453–475 show a composition bias toward polar residues; the sequence is RTSTSSAGNYDQGPVTPTTNAFN.

This sequence belongs to the ETS family. In terms of tissue distribution, embryonic ventral nervous system and 1 pair of neurons in each thoracic segment.

The protein localises to the nucleus. The chain is DNA-binding protein D-ETS-6 (Ets21C) from Drosophila melanogaster (Fruit fly).